Here is a 297-residue protein sequence, read N- to C-terminus: Aspartate carbamoyltransferase catalytic subunit (297 aa).

Carbamoyl phosphate is bound by residues Arg51 and Thr52. Lys79 contacts L-aspartate. Carbamoyl phosphate-binding residues include Arg101, His129, and Gln132. The L-aspartate site is built by Arg162 and Arg216. Carbamoyl phosphate contacts are provided by Gly257 and Pro258.

The protein belongs to the aspartate/ornithine carbamoyltransferase superfamily. ATCase family. As to quaternary structure, heterododecamer (2C3:3R2) of six catalytic PyrB chains organized as two trimers (C3), and six regulatory PyrI chains organized as three dimers (R2).

The catalysed reaction is carbamoyl phosphate + L-aspartate = N-carbamoyl-L-aspartate + phosphate + H(+). It participates in pyrimidine metabolism; UMP biosynthesis via de novo pathway; (S)-dihydroorotate from bicarbonate: step 2/3. In terms of biological role, catalyzes the condensation of carbamoyl phosphate and aspartate to form carbamoyl aspartate and inorganic phosphate, the committed step in the de novo pyrimidine nucleotide biosynthesis pathway. The polypeptide is Aspartate carbamoyltransferase catalytic subunit (Myxococcus xanthus (strain DK1622)).